A 352-amino-acid polypeptide reads, in one-letter code: Holliday junction branch migration complex subunit RuvB (352 aa).

Positions 1 to 181 (MTDRIVGAAK…FGIPVRLHFY (181 aa)) are large ATPase domain (RuvB-L). ATP contacts are provided by residues leucine 20, arginine 21, glycine 62, lysine 65, threonine 66, threonine 67, 128 to 130 (EDF), arginine 171, tyrosine 181, and arginine 218. Residue threonine 66 coordinates Mg(2+). The small ATPAse domain (RuvB-S) stretch occupies residues 182–252 (EVAELEGIVR…AADKALQRLE (71 aa)). The tract at residues 255-352 (ELGLDALDHR…FDGDEENGSA (98 aa)) is head domain (RuvB-H). DNA is bound by residues arginine 291, arginine 310, and arginine 315.

This sequence belongs to the RuvB family. In terms of assembly, homohexamer. Forms an RuvA(8)-RuvB(12)-Holliday junction (HJ) complex. HJ DNA is sandwiched between 2 RuvA tetramers; dsDNA enters through RuvA and exits via RuvB. An RuvB hexamer assembles on each DNA strand where it exits the tetramer. Each RuvB hexamer is contacted by two RuvA subunits (via domain III) on 2 adjacent RuvB subunits; this complex drives branch migration. In the full resolvosome a probable DNA-RuvA(4)-RuvB(12)-RuvC(2) complex forms which resolves the HJ.

It is found in the cytoplasm. It catalyses the reaction ATP + H2O = ADP + phosphate + H(+). In terms of biological role, the RuvA-RuvB-RuvC complex processes Holliday junction (HJ) DNA during genetic recombination and DNA repair, while the RuvA-RuvB complex plays an important role in the rescue of blocked DNA replication forks via replication fork reversal (RFR). RuvA specifically binds to HJ cruciform DNA, conferring on it an open structure. The RuvB hexamer acts as an ATP-dependent pump, pulling dsDNA into and through the RuvAB complex. RuvB forms 2 homohexamers on either side of HJ DNA bound by 1 or 2 RuvA tetramers; 4 subunits per hexamer contact DNA at a time. Coordinated motions by a converter formed by DNA-disengaged RuvB subunits stimulates ATP hydrolysis and nucleotide exchange. Immobilization of the converter enables RuvB to convert the ATP-contained energy into a lever motion, pulling 2 nucleotides of DNA out of the RuvA tetramer per ATP hydrolyzed, thus driving DNA branch migration. The RuvB motors rotate together with the DNA substrate, which together with the progressing nucleotide cycle form the mechanistic basis for DNA recombination by continuous HJ branch migration. Branch migration allows RuvC to scan DNA until it finds its consensus sequence, where it cleaves and resolves cruciform DNA. The polypeptide is Holliday junction branch migration complex subunit RuvB (Parvibaculum lavamentivorans (strain DS-1 / DSM 13023 / NCIMB 13966)).